Reading from the N-terminus, the 482-residue chain is Isoxanthopterin deaminase (482 aa).

Positions 74 and 76 each coordinate Zn(2+). Residue Gln-79 coordinates substrate. His-246 is a binding site for Zn(2+). Substrate contacts are provided by Glu-249 and His-283. 2 residues coordinate Zn(2+): His-283 and Asp-334.

This sequence belongs to the metallo-dependent hydrolases superfamily. ATZ/TRZ family. Zn(2+) is required as a cofactor.

The enzyme catalyses a 2-amino-4-hydroxypteridine + H2O + H(+) = a 2,4-dihydroxypteridine + NH4(+). The chain is Isoxanthopterin deaminase from Unknown prokaryotic organism.